Here is a 663-residue protein sequence, read N- to C-terminus: RING finger protein 145 (663 aa).

14 helical membrane passes run 53 to 73 (YLAL…LTLP), 77 to 97 (LVQL…HQIS), 123 to 143 (FTTA…VMKT), 146 to 166 (IWLF…VPLE), 168 to 188 (IVII…YFLG), 205 to 222 (LVQV…MSLW), 225 to 245 (LVVP…QIYS), 275 to 295 (YSLL…LTLC), 316 to 336 (TEGV…LQVV), 340 to 360 (FLLS…MLEI), 384 to 404 (SLCL…CQFF), 410 to 430 (LLII…TLFI), 460 to 480 (LLEF…TIFG), and 482 to 502 (WTVM…WLRA). A YLYF motif motif is present at residues 81–84 (YLYF). Cysteine 537 is an active-site residue. Residues 537-575 (CAICYQDMKSAVITPCSHFFHAGCLKKWLYVQETCPLCH) form an RING-type; atypical zinc finger. The segment at 607-663 (EGTEPPGQEHTPGTRIQEGSRDNNEYIARRPDNQEGAFDPKEYPHSAKDEAHPVESA) is disordered. Basic and acidic residues predominate over residues 624-663 (EGSRDNNEYIARRPDNQEGAFDPKEYPHSAKDEAHPVESA).

In terms of assembly, interacts (via YLYF motif) with INSIG1 and INSIG2.

The protein localises to the endoplasmic reticulum membrane. The catalysed reaction is S-ubiquitinyl-[E2 ubiquitin-conjugating enzyme]-L-cysteine + [acceptor protein]-L-lysine = [E2 ubiquitin-conjugating enzyme]-L-cysteine + N(6)-ubiquitinyl-[acceptor protein]-L-lysine.. Functionally, E3 ubiquitin ligase that catalyzes the direct transfer of ubiquitin from E2 ubiquitin-conjugating enzyme to a specific substrate. In response to bacterial infection, negatively regulates the phagocyte oxidative burst by controlling the turnover of the NADPH oxidase complex subunits. Promotes monoubiquitination of CYBA and 'Lys-48'-linked polyubiquitination and degradation of CYBB NADPH oxidase catalytic subunits, both essential for the generation of antimicrobial reactive oxygen species. Involved in the maintenance of cholesterol homeostasis. In response to high sterol concentrations ubiquitinates HMGCR, a rate-limiting enzyme in cholesterol biosynthesis, and targets it for degradation. The interaction with INSIG1 is required for this function. In addition, triggers ubiquitination of SCAP, likely inhibiting its transport to the Golgi apparatus and the subsequent processing/maturation of SREBPF2, ultimately down-regulating cholesterol biosynthesis. This chain is RING finger protein 145, found in Homo sapiens (Human).